Here is a 380-residue protein sequence, read N- to C-terminus: MAEQDLYKVLGVEKDASQDEIKKAYRKLSKKYHPDLNHEPGAEEKFKAVNEAYETLGDAQKRAQYDQFGSTGGQQGFGGAGGFGGQDFGGFGGGGGFEDIFSSFFGGGAGGSRRSNPTAPQQGRDLQYEMTLKFEDAIFGKKTTITYNREEQCETCGGSGAKPGTSPVTCSKCHGAGYIQVQTNTPLGRMMSQQVCDVCHGTGKEIKDKCATCGGSGHTEQSHSIKVTVPAGVEEGQQMRLQNQGEAGTNGGPYGDLFIIFRVEPSKDFERDGATIYFKLPIDFVQAALGDEVQVKTVHGDVKLKIPAGTQTGTTFRLRGKGAPRLRGNGNGDERVTVNIETPTHLNKGQKEALKTFAKASGKSVAGNGKSSLFDKLRGV.

Residues 5–69 (DLYKVLGVEK…QKRAQYDQFG (65 aa)) enclose the J domain. A CR-type zinc finger spans residues 140–222 (GKKTTITYNR…CGGSGHTEQS (83 aa)). Residues Cys-153, Cys-156, Cys-170, Cys-173, Cys-196, Cys-199, Cys-210, and Cys-213 each contribute to the Zn(2+) site. CXXCXGXG motif repeat units follow at residues 153-160 (CETCGGSG), 170-177 (CSKCHGAG), 196-203 (CDVCHGTG), and 210-217 (CATCGGSG).

The protein belongs to the DnaJ family. Homodimer. Requires Zn(2+) as cofactor.

It is found in the cytoplasm. Its function is as follows. Participates actively in the response to hyperosmotic and heat shock by preventing the aggregation of stress-denatured proteins and by disaggregating proteins, also in an autonomous, DnaK-independent fashion. Unfolded proteins bind initially to DnaJ; upon interaction with the DnaJ-bound protein, DnaK hydrolyzes its bound ATP, resulting in the formation of a stable complex. GrpE releases ADP from DnaK; ATP binding to DnaK triggers the release of the substrate protein, thus completing the reaction cycle. Several rounds of ATP-dependent interactions between DnaJ, DnaK and GrpE are required for fully efficient folding. Also involved, together with DnaK and GrpE, in the DNA replication of plasmids through activation of initiation proteins. This is Chaperone protein DnaJ from Lactiplantibacillus plantarum (strain ATCC BAA-793 / NCIMB 8826 / WCFS1) (Lactobacillus plantarum).